The sequence spans 282 residues: Putative 4-diphosphocytidyl-2-C-methyl-D-erythritol kinase (282 aa).

Lysine 9 is an active-site residue. ATP is bound at residue 93–103; the sequence is PVSAGLAGGSA. Aspartate 135 is an active-site residue.

Belongs to the GHMP kinase family. IspE subfamily.

It carries out the reaction 4-CDP-2-C-methyl-D-erythritol + ATP = 4-CDP-2-C-methyl-D-erythritol 2-phosphate + ADP + H(+). Functionally, catalyzes the phosphorylation of the position 2 hydroxy group of 4-diphosphocytidyl-2C-methyl-D-erythritol. The polypeptide is Putative 4-diphosphocytidyl-2-C-methyl-D-erythritol kinase (Staphylococcus aureus (strain MRSA252)).